The chain runs to 145 residues: [Ribosomal protein bS18]-alanine N-acetyltransferase (145 aa).

An N-acetyltransferase domain is found at 1–145; sequence MIETIVEQDF…ENAVIMALYL (145 aa). 67-69 contacts acetyl-CoA; it reads LAV. E101 serves as the catalytic Proton acceptor. N106 provides a ligand contact to acetyl-CoA. Y113 serves as the catalytic Proton donor.

It belongs to the acetyltransferase family. RimI subfamily.

It localises to the cytoplasm. It catalyses the reaction N-terminal L-alanyl-[ribosomal protein bS18] + acetyl-CoA = N-terminal N(alpha)-acetyl-L-alanyl-[ribosomal protein bS18] + CoA + H(+). Functionally, acetylates the N-terminal alanine of ribosomal protein bS18. This Haemophilus ducreyi (strain 35000HP / ATCC 700724) protein is [Ribosomal protein bS18]-alanine N-acetyltransferase.